A 191-amino-acid chain; its full sequence is Lipid A acyltransferase PagP (191 aa).

Positions 1 to 26 (MLKVNKYVILIIAFVSQMMFSTTAQA) are cleaved as a signal peptide. Residues His-63, Asp-106, and Ser-107 contribute to the active site.

Belongs to the lipid A palmitoyltransferase family. Homodimer.

The protein resides in the cell outer membrane. The catalysed reaction is a lipid A + a 1,2-diacyl-sn-glycero-3-phosphocholine = a hepta-acyl lipid A + a 2-acyl-sn-glycero-3-phosphocholine. It catalyses the reaction a lipid IVA + a 1,2-diacyl-sn-glycero-3-phosphocholine = a lipid IVB + a 2-acyl-sn-glycero-3-phosphocholine. It carries out the reaction a lipid IIA + a 1,2-diacyl-sn-glycero-3-phosphocholine = a lipid IIB + a 2-acyl-sn-glycero-3-phosphocholine. Functionally, transfers a fatty acid residue from the sn-1 position of a phospholipid to the N-linked hydroxyfatty acid chain on the proximal unit of lipid A or its precursors. The polypeptide is Lipid A acyltransferase PagP (Enterobacter lignolyticus (strain SCF1)).